We begin with the raw amino-acid sequence, 430 residues long: Adenylosuccinate synthetase (430 aa).

Residues Gly12–Lys18 and Gly40–Thr42 contribute to the GTP site. Asp13 acts as the Proton acceptor in catalysis. Mg(2+) is bound by residues Asp13 and Gly40. IMP contacts are provided by residues Asp13–Lys16, Asn38–His41, Thr128, Arg142, Gln223, Thr238, and Arg302. Catalysis depends on His41, which acts as the Proton donor. Thr298–Arg304 is a binding site for substrate. Residues Arg304, Leu330 to Asp332, and Ser412 to Gly414 each bind GTP.

This sequence belongs to the adenylosuccinate synthetase family. Homodimer. Mg(2+) serves as cofactor.

It is found in the cytoplasm. The enzyme catalyses IMP + L-aspartate + GTP = N(6)-(1,2-dicarboxyethyl)-AMP + GDP + phosphate + 2 H(+). It participates in purine metabolism; AMP biosynthesis via de novo pathway; AMP from IMP: step 1/2. In terms of biological role, plays an important role in the de novo pathway of purine nucleotide biosynthesis. Catalyzes the first committed step in the biosynthesis of AMP from IMP. The protein is Adenylosuccinate synthetase of Listeria monocytogenes serovar 1/2a (strain ATCC BAA-679 / EGD-e).